Reading from the N-terminus, the 347-residue chain is GMP reductase (347 aa).

108 to 131 (ADFEKTKQILDLNPALNFVCIDVA) contacts NADP(+). Positions 181 and 183 each coordinate K(+). Cys-186 functions as the Thioimidate intermediate in the catalytic mechanism. Residue 216–239 (IISDGGCTTPGDVAKAFGGGADFV) participates in NADP(+) binding.

Belongs to the IMPDH/GMPR family. GuaC type 1 subfamily. Homotetramer.

The catalysed reaction is IMP + NH4(+) + NADP(+) = GMP + NADPH + 2 H(+). Its function is as follows. Catalyzes the irreversible NADPH-dependent deamination of GMP to IMP. It functions in the conversion of nucleobase, nucleoside and nucleotide derivatives of G to A nucleotides, and in maintaining the intracellular balance of A and G nucleotides. This Escherichia coli O157:H7 protein is GMP reductase.